The following is a 458-amino-acid chain: Phosphoglucosamine mutase (458 aa).

Catalysis depends on S106, which acts as the Phosphoserine intermediate. Positions 106, 247, 249, and 251 each coordinate Mg(2+). Position 106 is a phosphoserine (S106).

It belongs to the phosphohexose mutase family. Requires Mg(2+) as cofactor. Activated by phosphorylation.

The catalysed reaction is alpha-D-glucosamine 1-phosphate = D-glucosamine 6-phosphate. Catalyzes the conversion of glucosamine-6-phosphate to glucosamine-1-phosphate. This Chlamydia abortus (strain DSM 27085 / S26/3) (Chlamydophila abortus) protein is Phosphoglucosamine mutase.